The primary structure comprises 396 residues: Elongation factor Tu (396 aa).

The tr-type G domain occupies 10-206 (KPHVNVGTIG…ALDSYIPEPT (197 aa)). Residues 19-26 (GHVDHGKT) are G1. 19–26 (GHVDHGKT) lines the GTP pocket. Position 26 (Thr26) interacts with Mg(2+). A G2 region spans residues 60–64 (GITIS). Residues 81 to 84 (DCPG) are G3. Residues 81 to 85 (DCPGH) and 136 to 139 (NKAD) each bind GTP. A G4 region spans residues 136 to 139 (NKAD). A G5 region spans residues 174 to 176 (SAL).

This sequence belongs to the TRAFAC class translation factor GTPase superfamily. Classic translation factor GTPase family. EF-Tu/EF-1A subfamily. As to quaternary structure, monomer.

It localises to the cytoplasm. It carries out the reaction GTP + H2O = GDP + phosphate + H(+). GTP hydrolase that promotes the GTP-dependent binding of aminoacyl-tRNA to the A-site of ribosomes during protein biosynthesis. This is Elongation factor Tu from Hydrogenovibrio crunogenus (strain DSM 25203 / XCL-2) (Thiomicrospira crunogena).